The following is a 704-amino-acid chain: Elongation factor G 1 (704 aa).

Residues 8 to 291 form the tr-type G domain; that stretch reads ERYRNIGISA…AVIDYLPSPA (284 aa). GTP is bound by residues 17–24, 88–92, and 142–145; these read AHIDAGKT, DTPGH, and NKMD.

Belongs to the TRAFAC class translation factor GTPase superfamily. Classic translation factor GTPase family. EF-G/EF-2 subfamily.

Its subcellular location is the cytoplasm. Its function is as follows. Catalyzes the GTP-dependent ribosomal translocation step during translation elongation. During this step, the ribosome changes from the pre-translocational (PRE) to the post-translocational (POST) state as the newly formed A-site-bound peptidyl-tRNA and P-site-bound deacylated tRNA move to the P and E sites, respectively. Catalyzes the coordinated movement of the two tRNA molecules, the mRNA and conformational changes in the ribosome. This is Elongation factor G 1 from Burkholderia thailandensis (strain ATCC 700388 / DSM 13276 / CCUG 48851 / CIP 106301 / E264).